Reading from the N-terminus, the 259-residue chain is MIRNPFHLVEYSPWPLTGSLGAMFLTVGLTSWFHNHGFITMLLGLFLVLMTMFQWWRDIIRESTFQGYHTMKVSLGMRMGMVLFITSEICFFFAFFWAYFHSSLAPNTDIGASWPPLHINPLNPFQIPLLNTAILLASGVTVTWAHHSLMGGNHAEATQSMVLTVILGGYFTLLQAEEYMEAPFSIADSVYGATFFVATGFHGLHVIIGSVFLLICLFRMLIHHFSTNHHFGFEAAAWYWHFVDVVWLILYTCIYWWGS.

The next 7 membrane-spanning stretches (helical) occupy residues Pro13 to Phe33, His36 to Trp56, Gly80 to Phe100, Phe125 to Ala145, His154 to Leu174, Phe195 to Ile215, and Ala237 to Trp257.

The protein belongs to the cytochrome c oxidase subunit 3 family. Component of the cytochrome c oxidase (complex IV, CIV), a multisubunit enzyme composed of a catalytic core of 3 subunits and several supernumerary subunits. The complex exists as a monomer or a dimer and forms supercomplexes (SCs) in the inner mitochondrial membrane with ubiquinol-cytochrome c oxidoreductase (cytochrome b-c1 complex, complex III, CIII).

It localises to the mitochondrion inner membrane. It catalyses the reaction 4 Fe(II)-[cytochrome c] + O2 + 8 H(+)(in) = 4 Fe(III)-[cytochrome c] + 2 H2O + 4 H(+)(out). In terms of biological role, component of the cytochrome c oxidase, the last enzyme in the mitochondrial electron transport chain which drives oxidative phosphorylation. The respiratory chain contains 3 multisubunit complexes succinate dehydrogenase (complex II, CII), ubiquinol-cytochrome c oxidoreductase (cytochrome b-c1 complex, complex III, CIII) and cytochrome c oxidase (complex IV, CIV), that cooperate to transfer electrons derived from NADH and succinate to molecular oxygen, creating an electrochemical gradient over the inner membrane that drives transmembrane transport and the ATP synthase. Cytochrome c oxidase is the component of the respiratory chain that catalyzes the reduction of oxygen to water. Electrons originating from reduced cytochrome c in the intermembrane space (IMS) are transferred via the dinuclear copper A center (CU(A)) of subunit 2 and heme A of subunit 1 to the active site in subunit 1, a binuclear center (BNC) formed by heme A3 and copper B (CU(B)). The BNC reduces molecular oxygen to 2 water molecules using 4 electrons from cytochrome c in the IMS and 4 protons from the mitochondrial matrix. The chain is Cytochrome c oxidase subunit 3 (COIII) from Heterololigo bleekeri (Spear squid).